Here is a 315-residue protein sequence, read N- to C-terminus: Transaldolase (315 aa).

Lys125 (schiff-base intermediate with substrate) is an active-site residue.

The protein belongs to the transaldolase family. Type 1 subfamily. In terms of assembly, homodimer.

It localises to the cytoplasm. The catalysed reaction is D-sedoheptulose 7-phosphate + D-glyceraldehyde 3-phosphate = D-erythrose 4-phosphate + beta-D-fructose 6-phosphate. It participates in carbohydrate degradation; pentose phosphate pathway; D-glyceraldehyde 3-phosphate and beta-D-fructose 6-phosphate from D-ribose 5-phosphate and D-xylulose 5-phosphate (non-oxidative stage): step 2/3. Its function is as follows. Transaldolase is important for the balance of metabolites in the pentose-phosphate pathway. This is Transaldolase from Leptothrix cholodnii (strain ATCC 51168 / LMG 8142 / SP-6) (Leptothrix discophora (strain SP-6)).